Consider the following 326-residue polypeptide: Transposase InsH for insertion sequence element IS5Y (326 aa).

It belongs to the transposase 11 family.

Functionally, involved in the transposition of the insertion sequence IS5. The chain is Transposase InsH for insertion sequence element IS5Y (insH5) from Escherichia coli (strain K12).